We begin with the raw amino-acid sequence, 125 residues long: Fluoride-specific ion channel FluC (125 aa).

Transmembrane regions (helical) follow at residues 5–25 (LLVALGGALGSLLRYGLGALV), 29–49 (LGAGFPWSTLFVNALGSFLIG), 66–86 (LFLAVGVLGGFTTFSSLSYET), and 95–115 (VGKALLYAFGSLFLGLFLAFL). Positions 74 and 77 each coordinate Na(+).

This sequence belongs to the fluoride channel Fluc/FEX (TC 1.A.43) family.

Its subcellular location is the cell inner membrane. It carries out the reaction fluoride(in) = fluoride(out). With respect to regulation, na(+) is not transported, but it plays an essential structural role and its presence is essential for fluoride channel function. Functionally, fluoride-specific ion channel. Important for reducing fluoride concentration in the cell, thus reducing its toxicity. The protein is Fluoride-specific ion channel FluC of Thermus thermophilus (strain ATCC 27634 / DSM 579 / HB8).